A 226-amino-acid chain; its full sequence is Agamous-like MADS-box protein AP3 (226 aa).

One can recognise an MADS-box domain in the interval 1 to 61 (MARGKIEIKR…GKLHEYISPS (61 aa)). Positions 84 to 174 (YERMQENLKK…LHEFDARDRD (91 aa)) constitute a K-box domain.

In terms of tissue distribution, expressed during flower development in stamens and petals.

The protein resides in the nucleus. Its function is as follows. Probable transcription factor involved in flower development. The protein is Agamous-like MADS-box protein AP3 of Vitis vinifera (Grape).